The chain runs to 343 residues: Ribosomal RNA-processing protein 8 (343 aa).

The disordered stretch occupies residues 1 to 123 (MGKKRKITDE…NDDVAAAPEE (123 aa)). Positions 7–33 (ITDEKDAQHVPAEKREKVENWLKKSTE) are enriched in basic and acidic residues. 2 stretches are compositionally biased toward basic residues: residues 45–59 (KKKR…KLAA) and 89–101 (KKKR…KKKF). The span at 112 to 123 (TENDDVAAAPEE) shows a compositional bias: acidic residues. Residues His169, Gly204, Asp224, Asp236, Met237, and Cys253 each coordinate S-adenosyl-L-methionine.

The protein belongs to the methyltransferase superfamily. RRP8 family.

Its subcellular location is the nucleus. It localises to the nucleolus. In terms of biological role, probable methyltransferase required to silence rDNA. Involved in regulation of antisense ribosomal siRNA production. Required for the N1-methyladenosine modification of 26S rRNAs. In Caenorhabditis elegans, this protein is Ribosomal RNA-processing protein 8 (rrp-8).